Here is a 916-residue protein sequence, read N- to C-terminus: Dual serine/threonine and tyrosine protein kinase (916 aa).

Positions 1–19 (MQRDGTRSARRMDEGDRRT) are enriched in basic and acidic residues. Positions 1 to 27 (MQRDGTRSARRMDEGDRRTGSAGRSGS) are disordered. The Protein kinase domain occupies 641-895 (PRIGRELGRG…PLMGIVQPML (255 aa)). ATP is bound by residues 647–655 (LGRGQYGVV) and lysine 670. The active-site Proton acceptor is aspartate 766.

Belongs to the protein kinase superfamily. Ser/Thr protein kinase family.

The protein localises to the cytoplasm. Its subcellular location is the cell membrane. It is found in the apical cell membrane. It localises to the basolateral cell membrane. The protein resides in the cell junction. The catalysed reaction is L-seryl-[protein] + ATP = O-phospho-L-seryl-[protein] + ADP + H(+). The enzyme catalyses L-threonyl-[protein] + ATP = O-phospho-L-threonyl-[protein] + ADP + H(+). It carries out the reaction L-tyrosyl-[protein] + ATP = O-phospho-L-tyrosyl-[protein] + ADP + H(+). Functionally, may act as a positive regulator of ERK phosphorylation downstream of fibroblast growth factor-receptor activation. May induce both caspase-dependent apoptosis and caspase-independent cell death. May play a role in the embryonic development. This chain is Dual serine/threonine and tyrosine protein kinase (dstyk), found in Xenopus laevis (African clawed frog).